Consider the following 213-residue polypeptide: Glycerol-3-phosphate acyltransferase (213 aa).

Helical transmembrane passes span 2–22, 52–74, 81–100, 112–132, 143–163, and 164–184; these read ITIV…GLWI, AGMA…PIIF, PLIF…FAGF, VIFG…FGAL, VTAS…GFIL, and SNYD…IIIR.

This sequence belongs to the PlsY family. As to quaternary structure, probably interacts with PlsX.

It localises to the cell membrane. The catalysed reaction is an acyl phosphate + sn-glycerol 3-phosphate = a 1-acyl-sn-glycero-3-phosphate + phosphate. It functions in the pathway lipid metabolism; phospholipid metabolism. Catalyzes the transfer of an acyl group from acyl-phosphate (acyl-PO(4)) to glycerol-3-phosphate (G3P) to form lysophosphatidic acid (LPA). This enzyme utilizes acyl-phosphate as fatty acyl donor, but not acyl-CoA or acyl-ACP. The chain is Glycerol-3-phosphate acyltransferase from Streptococcus pneumoniae (strain ATCC 700669 / Spain 23F-1).